A 478-amino-acid polypeptide reads, in one-letter code: Ribosomal RNA small subunit methyltransferase F (478 aa).

Residues 126–132, Glu150, Asp177, and Asp195 each bind S-adenosyl-L-methionine; that span reads AAAPGSK. The Nucleophile role is filled by Cys248.

This sequence belongs to the class I-like SAM-binding methyltransferase superfamily. RsmB/NOP family.

The protein localises to the cytoplasm. It carries out the reaction cytidine(1407) in 16S rRNA + S-adenosyl-L-methionine = 5-methylcytidine(1407) in 16S rRNA + S-adenosyl-L-homocysteine + H(+). In terms of biological role, specifically methylates the cytosine at position 1407 (m5C1407) of 16S rRNA. In Erwinia tasmaniensis (strain DSM 17950 / CFBP 7177 / CIP 109463 / NCPPB 4357 / Et1/99), this protein is Ribosomal RNA small subunit methyltransferase F.